The following is a 249-amino-acid chain: Proteasome subunit alpha type-3 (249 aa).

Belongs to the peptidase T1A family. The 26S proteasome consists of a 20S proteasome core and two 19S regulatory subunits. The 20S proteasome core is composed of 28 subunits that are arranged in four stacked rings, resulting in a barrel-shaped structure. The two end rings are each formed by seven alpha subunits, and the two central rings are each formed by seven beta subunits. The catalytic chamber with the active sites is on the inside of the barrel.

It is found in the cytoplasm. The protein resides in the nucleus. Functionally, the proteasome is a multicatalytic proteinase complex which is characterized by its ability to cleave peptides with Arg, Phe, Tyr, Leu, and Glu adjacent to the leaving group at neutral or slightly basic pH. The proteasome has an ATP-dependent proteolytic activity. The sequence is that of Proteasome subunit alpha type-3 (PAG1) from Spinacia oleracea (Spinach).